Here is an 81-residue protein sequence, read N- to C-terminus: Short neurotoxin SN160 (81 aa).

An N-terminal signal peptide occupies residues 1 to 21; the sequence is MKTLLLTLVVVTIVCLDLGYT. 4 cysteine pairs are disulfide-bonded: Cys-24–Cys-43, Cys-38–Cys-60, Cys-62–Cys-73, and Cys-74–Cys-79.

It belongs to the three-finger toxin family. Short-chain subfamily. Type I alpha-neurotoxin sub-subfamily. Expressed by the venom gland.

Its subcellular location is the secreted. Binds to muscle nicotinic acetylcholine receptor (nAChR) and inhibit acetylcholine from binding to the receptor, thereby impairing neuromuscular transmission. The sequence is that of Short neurotoxin SN160 from Hydrophis hardwickii (Hardwick's spine-bellied seasnake).